The chain runs to 186 residues: Potassium-transporting ATPase KdpC subunit (186 aa).

Residues 10–30 form a helical membrane-spanning segment; that stretch reads LTIITMVLCGFLFPLAITLIG.

It belongs to the KdpC family. In terms of assembly, the system is composed of three essential subunits: KdpA, KdpB and KdpC.

It is found in the cell membrane. Its function is as follows. Part of the high-affinity ATP-driven potassium transport (or Kdp) system, which catalyzes the hydrolysis of ATP coupled with the electrogenic transport of potassium into the cytoplasm. This subunit acts as a catalytic chaperone that increases the ATP-binding affinity of the ATP-hydrolyzing subunit KdpB by the formation of a transient KdpB/KdpC/ATP ternary complex. The sequence is that of Potassium-transporting ATPase KdpC subunit from Staphylococcus aureus (strain MSSA476).